A 421-amino-acid chain; its full sequence is Acyl-coenzyme A thioesterase 1 (421 aa).

Catalysis depends on charge relay system residues Ser232, Asp326, and His360.

Belongs to the C/M/P thioester hydrolase family. In terms of assembly, monomer.

Its subcellular location is the cytoplasm. It is found in the cytosol. It catalyses the reaction hexadecanoyl-CoA + H2O = hexadecanoate + CoA + H(+). The enzyme catalyses decanoyl-CoA + H2O = decanoate + CoA + H(+). The catalysed reaction is dodecanoyl-CoA + H2O = dodecanoate + CoA + H(+). It carries out the reaction tetradecanoyl-CoA + H2O = tetradecanoate + CoA + H(+). It catalyses the reaction octadecanoyl-CoA + H2O = octadecanoate + CoA + H(+). The enzyme catalyses eicosanoyl-CoA + H2O = eicosanoate + CoA + H(+). The catalysed reaction is (9Z)-octadecenoyl-CoA + H2O = (9Z)-octadecenoate + CoA + H(+). It carries out the reaction (9Z)-hexadecenoyl-CoA + H2O = (9Z)-hexadecenoate + CoA + H(+). It catalyses the reaction (9E)-octadecenoyl-CoA + H2O = (9E)-octadecenoate + CoA + H(+). The protein operates within lipid metabolism; fatty acid metabolism. Its function is as follows. Catalyzes the hydrolysis of acyl-CoAs into free fatty acids and coenzyme A (CoASH), regulating their respective intracellular levels. More active towards saturated and unsaturated long chain fatty acyl-CoAs (C12-C20). The sequence is that of Acyl-coenzyme A thioesterase 1 (ACOT1) from Homo sapiens (Human).